Consider the following 391-residue polypeptide: S-adenosylmethionine synthase (391 aa).

ATP is bound at residue His-16. Asp-18 provides a ligand contact to Mg(2+). Glu-44 contributes to the K(+) binding site. Glu-57 and Gln-101 together coordinate L-methionine. The tract at residues 101–111 (QSADIAQGVDA) is flexible loop. ATP contacts are provided by residues 166 to 168 (DAK), Asp-244, 250 to 251 (RK), Ala-267, and Lys-271. Asp-244 lines the L-methionine pocket. Lys-275 contributes to the L-methionine binding site.

This sequence belongs to the AdoMet synthase family. As to quaternary structure, homotetramer; dimer of dimers. It depends on Mg(2+) as a cofactor. K(+) serves as cofactor.

It localises to the cytoplasm. The catalysed reaction is L-methionine + ATP + H2O = S-adenosyl-L-methionine + phosphate + diphosphate. It functions in the pathway amino-acid biosynthesis; S-adenosyl-L-methionine biosynthesis; S-adenosyl-L-methionine from L-methionine: step 1/1. Catalyzes the formation of S-adenosylmethionine (AdoMet) from methionine and ATP. The overall synthetic reaction is composed of two sequential steps, AdoMet formation and the subsequent tripolyphosphate hydrolysis which occurs prior to release of AdoMet from the enzyme. This is S-adenosylmethionine synthase from Zymomonas mobilis subsp. mobilis (strain ATCC 31821 / ZM4 / CP4).